The primary structure comprises 1349 residues: ABC multidrug transporter mdr1 (1349 aa).

The tract at residues 1–62 is disordered; that stretch reads MPAPETGASS…PDGKQKDHGK (62 aa). Over residues 35–45 the composition is skewed to basic and acidic residues; the sequence is DNEKPHDHHSL. The next 4 membrane-spanning stretches (helical) occupy residues 108-128, 162-182, 234-254, and 257-277; these read ILII…LPLF, YFVY…VGFI, KVGL…VAYV, and WKLA…MGGG. The ABC transmembrane type-1 1 domain occupies 112–402; it reads LVSAICAIAA…VAPNGQAFTN (291 aa). Asn308 carries an N-linked (GlcNAc...) asparagine glycan. 2 consecutive transmembrane segments (helical) span residues 339-359 and 371-391; these read ILGM…GLGF and VNVG…FSLG. The ABC transporter 1 domain occupies 437–682; it reads IEFRNVKHIY…KGTYYKLVEA (246 aa). 472 to 479 contacts ATP; that stretch reads GPSGSGKS. The next 2 helical transmembrane spans lie at 779-799 and 828-848; these read MLIG…QAFL and FFVV…AFAI. In terms of domain architecture, ABC transmembrane type-1 2 spans 780 to 1069; that stretch reads LIGLTFSFLA…VFSFAPDMGK (290 aa). 2 N-linked (GlcNAc...) asparagine glycosylation sites follow: Asn878 and Asn893. The next 4 membrane-spanning stretches (helical) occupy residues 896–916, 926–948, 1016–1036, and 1043–1063; these read GVSG…GAAM, LALV…FYML, ALVF…LGHH, and FFVC…VFSF. The ABC transporter 2 domain occupies 1104–1342; sequence IEFRDVHFRY…KGRYYELVNL (239 aa). N-linked (GlcNAc...) asparagine glycosylation is present at Asn1126. 1139–1146 serves as a coordination point for ATP; that stretch reads GPSGCGKS.

This sequence belongs to the ABC transporter superfamily. ABCB family. Multidrug resistance exporter (TC 3.A.1.201) subfamily.

The protein resides in the cell membrane. It catalyses the reaction voriconazole(in) + ATP + H2O = voriconazole(out) + ADP + phosphate + H(+). Pleiotropic ABC efflux transporter that may be involved in A.fumigatus adaptation to azoles such as vorizonazole. The protein is ABC multidrug transporter mdr1 of Aspergillus fumigatus (strain ATCC MYA-4609 / CBS 101355 / FGSC A1100 / Af293) (Neosartorya fumigata).